Here is a 163-residue protein sequence, read N- to C-terminus: Choriogonadotropin subunit beta variant 2 (163 aa).

An N-terminal signal peptide occupies residues 1–18 (MSKGLLLLLLLSMGGTWA). 6 disulfide bridges follow: Cys27-Cys75, Cys41-Cys90, Cys44-Cys128, Cys52-Cys106, Cys56-Cys108, and Cys111-Cys118. N-linked (GlcNAc...) asparagine glycans are attached at residues Asn31 and Asn48. Positions 129 to 163 (DDPRFQASSSSKAPPPSLPSPSRLPGPSDTPILPQ) are disordered. The span at 141–152 (APPPSLPSPSRL) shows a compositional bias: pro residues.

It belongs to the glycoprotein hormones subunit beta family. Expressed in placenta, testis and pituitary.

Its subcellular location is the secreted. The protein is Choriogonadotropin subunit beta variant 2 (CGB2) of Homo sapiens (Human).